We begin with the raw amino-acid sequence, 311 residues long: DNA-directed RNA polymerase subunit alpha (311 aa).

The interval 1 to 227 (MAQFQIECIE…NLFCSLRNLD (227 aa)) is alpha N-terminal domain (alpha-NTD). Residues 239–311 (DKKISQVLIE…GISLPKEKSD (73 aa)) form an alpha C-terminal domain (alpha-CTD) region.

The protein belongs to the RNA polymerase alpha chain family. In terms of assembly, in plastids the minimal PEP RNA polymerase catalytic core is composed of four subunits: alpha, beta, beta', and beta''. When a (nuclear-encoded) sigma factor is associated with the core the holoenzyme is formed, which can initiate transcription.

Its subcellular location is the plastid. The protein resides in the chloroplast. The catalysed reaction is RNA(n) + a ribonucleoside 5'-triphosphate = RNA(n+1) + diphosphate. Functionally, DNA-dependent RNA polymerase catalyzes the transcription of DNA into RNA using the four ribonucleoside triphosphates as substrates. The protein is DNA-directed RNA polymerase subunit alpha of Pyropia yezoensis (Susabi-nori).